A 410-amino-acid polypeptide reads, in one-letter code: Peptidase T (410 aa).

His79 serves as a coordination point for Zn(2+). The active site involves Asp81. Asp142 contributes to the Zn(2+) binding site. The active-site Proton acceptor is Glu176. 3 residues coordinate Zn(2+): Glu177, Asp199, and His381.

The protein belongs to the peptidase M20B family. Zn(2+) is required as a cofactor.

Its subcellular location is the cytoplasm. The enzyme catalyses Release of the N-terminal residue from a tripeptide.. Cleaves the N-terminal amino acid of tripeptides. The polypeptide is Peptidase T (Listeria monocytogenes serotype 4a (strain HCC23)).